The chain runs to 273 residues: Putative esterase/lipase 3 (273 aa).

Residue H34 is part of the active site. The active-site Charge relay system is S100.

It belongs to the lipase/esterase LIP3/BchO family.

This chain is Putative esterase/lipase 3, found in Mycoplasma genitalium (strain ATCC 33530 / DSM 19775 / NCTC 10195 / G37) (Mycoplasmoides genitalium).